The primary structure comprises 117 residues: Protein GL2-INTERACTING REPRESSOR 2 (117 aa).

The segment at 1–56 is disordered; it reads MSRRNKNGPKLELRLNLSPPPSQASQMSLVRSPNRSNTTSPSSCVSSETNQEENET. The EAR signature appears at 10–15; the sequence is KLELRL. Over residues 31 to 49 the composition is skewed to low complexity; sequence RSPNRSNTTSPSSCVSSET.

As to quaternary structure, interacts with GL2. Interacts with TPL.

Its subcellular location is the nucleus. Acts as a negative regulator of root hair development redundantly with GIR1. GIR1 and GIR2 may function as adapter proteins that associate with GL2 and participate in the control of root hair formation. GIR1 and GIR2 may function as adapter proteins that associate with TPL and participate in the repression of root gene expression. The sequence is that of Protein GL2-INTERACTING REPRESSOR 2 from Arabidopsis thaliana (Mouse-ear cress).